The following is an 88-amino-acid chain: Large ribosomal subunit protein bL27 (88 aa).

The protein belongs to the bacterial ribosomal protein bL27 family.

In Mycolicibacterium vanbaalenii (strain DSM 7251 / JCM 13017 / BCRC 16820 / KCTC 9966 / NRRL B-24157 / PYR-1) (Mycobacterium vanbaalenii), this protein is Large ribosomal subunit protein bL27.